The following is a 751-amino-acid chain: Photosystem I P700 chlorophyll a apoprotein A1 (751 aa).

8 helical membrane passes run 73–96, 159–182, 198–222, 294–312, 349–372, 388–414, 436–458, and 533–551; these read VFSA…FHGA, LYST…FHFH, LNHH…HVSL, TAHH…GHMY, WHAQ…HHQY, LSLF…IFMI, AIIS…LYIH, and FLVH…LILL. 2 residues coordinate [4Fe-4S] cluster: Cys-575 and Cys-584. Transmembrane regions (helical) follow at residues 591-612 and 665-687; these read HVFL…HFSW and LSAY…MFLF. Residue His-676 participates in chlorophyll a' binding. Chlorophyll a contacts are provided by Met-684 and Tyr-692. Trp-693 contributes to the phylloquinone binding site. Residues 725 to 745 form a helical membrane-spanning segment; that stretch reads AVGVAHYLLGGIATTWSFFLA.

It belongs to the PsaA/PsaB family. In terms of assembly, the PsaA/B heterodimer binds the P700 chlorophyll special pair and subsequent electron acceptors. PSI consists of a core antenna complex that captures photons, and an electron transfer chain that converts photonic excitation into a charge separation. The eukaryotic PSI reaction center is composed of at least 11 subunits. It depends on P700 is a chlorophyll a/chlorophyll a' dimer, A0 is one or more chlorophyll a, A1 is one or both phylloquinones and FX is a shared 4Fe-4S iron-sulfur center. as a cofactor.

The protein resides in the plastid. Its subcellular location is the chloroplast thylakoid membrane. The catalysed reaction is reduced [plastocyanin] + hnu + oxidized [2Fe-2S]-[ferredoxin] = oxidized [plastocyanin] + reduced [2Fe-2S]-[ferredoxin]. Functionally, psaA and PsaB bind P700, the primary electron donor of photosystem I (PSI), as well as the electron acceptors A0, A1 and FX. PSI is a plastocyanin/cytochrome c6-ferredoxin oxidoreductase, converting photonic excitation into a charge separation, which transfers an electron from the donor P700 chlorophyll pair to the spectroscopically characterized acceptors A0, A1, FX, FA and FB in turn. Oxidized P700 is reduced on the lumenal side of the thylakoid membrane by plastocyanin or cytochrome c6. The polypeptide is Photosystem I P700 chlorophyll a apoprotein A1 (Tupiella akineta (Green alga)).